We begin with the raw amino-acid sequence, 184 residues long: Orotate phosphoribosyltransferase (184 aa).

Residues Arg99, Lys100, Lys103, His105, and 125–133 (EDTTTTGNS) contribute to the 5-phospho-alpha-D-ribose 1-diphosphate site. Orotate contacts are provided by Thr129 and Arg157.

It belongs to the purine/pyrimidine phosphoribosyltransferase family. PyrE subfamily. Homodimer. It depends on Mg(2+) as a cofactor.

The catalysed reaction is orotidine 5'-phosphate + diphosphate = orotate + 5-phospho-alpha-D-ribose 1-diphosphate. It functions in the pathway pyrimidine metabolism; UMP biosynthesis via de novo pathway; UMP from orotate: step 1/2. Its function is as follows. Catalyzes the transfer of a ribosyl phosphate group from 5-phosphoribose 1-diphosphate to orotate, leading to the formation of orotidine monophosphate (OMP). The polypeptide is Orotate phosphoribosyltransferase (Corynebacterium glutamicum (strain R)).